Here is a 1482-residue protein sequence, read N- to C-terminus: Chromosome partition protein MukB (1482 aa).

34–41 (GGNGAGKS) contacts ATP. The stretch at 333–665 (ASDHLNLVQT…LEKQIERLSQ (333 aa)) forms a coiled coil. The interval 666-783 (PSGAEDSRMI…ELPLFGRAAR (118 aa)) is flexible hinge. Coiled coils occupy residues 784–1116 (ENRL…AKAG) and 1209–1260 (VDAI…MLNQ).

The protein belongs to the SMC family. MukB subfamily. In terms of assembly, homodimerization via its hinge domain. Binds to DNA via its C-terminal region. Interacts, and probably forms a ternary complex, with MukE and MukF via its C-terminal region. The complex formation is stimulated by calcium or magnesium. Interacts with tubulin-related protein FtsZ.

It is found in the cytoplasm. The protein resides in the nucleoid. In terms of biological role, plays a central role in chromosome condensation, segregation and cell cycle progression. Functions as a homodimer, which is essential for chromosome partition. Involved in negative DNA supercoiling in vivo, and by this means organize and compact chromosomes. May achieve or facilitate chromosome segregation by condensation DNA from both sides of a centrally located replisome during cell division. The sequence is that of Chromosome partition protein MukB from Photorhabdus laumondii subsp. laumondii (strain DSM 15139 / CIP 105565 / TT01) (Photorhabdus luminescens subsp. laumondii).